The chain runs to 586 residues: Asparagine synthetase [glutamine-hydrolyzing] 2 (586 aa).

Cysteine 2 (for GATase activity) is an active-site residue. The Glutamine amidotransferase type-2 domain maps to 2-185; it reads CGILAVLGCS…PGHLYSSKEK (184 aa). L-glutamine is bound by residues 50–54, 75–77, and aspartate 98; these read RLAIV and NGE. Positions 193 to 516 constitute an Asparagine synthetase domain; it reads PPWFSEAIPS…PQNSARLSVP (324 aa). ATP-binding positions include leucine 231, valine 267, and 341–342; that span reads SG.

The catalysed reaction is L-aspartate + L-glutamine + ATP + H2O = L-asparagine + L-glutamate + AMP + diphosphate + H(+). It functions in the pathway amino-acid biosynthesis; L-asparagine biosynthesis; L-asparagine from L-aspartate (L-Gln route): step 1/1. This Lotus japonicus (Lotus corniculatus var. japonicus) protein is Asparagine synthetase [glutamine-hydrolyzing] 2 (AS2).